Here is a 189-residue protein sequence, read N- to C-terminus: Interferon alpha-G (189 aa).

Residues 1 to 23 (MAPAWSLLLALLLLSCNAICSLG) form the signal peptide. Disulfide bonds link cysteine 24-cysteine 122 and cysteine 52-cysteine 162.

This sequence belongs to the alpha/beta interferon family.

It is found in the secreted. In terms of biological role, produced by macrophages, IFN-alpha have antiviral activities. Interferon stimulates the production of two enzymes: a protein kinase and an oligoadenylate synthetase. This Bos taurus (Bovine) protein is Interferon alpha-G (IFNAG).